A 1724-amino-acid chain; its full sequence is Sperm flagellar protein 2 (1724 aa).

The region spanning M1–Q105 is the Calponin-homology (CH) domain. Coiled-coil stretches lie at residues K170 to Q203 and R255 to E351. The segment at H545–D576 is disordered. The span at E558–D576 shows a compositional bias: basic and acidic residues. The stretch at N665 to M691 forms a coiled coil. The disordered stretch occupies residues E828–G910. Over residues E853–Q862 the composition is skewed to basic and acidic residues. Residues E995–I1021 are a coiled coil. Positions R1177 to S1194 are enriched in basic and acidic residues. Disordered stretches follow at residues R1177–E1241, V1580–T1618, and S1704–K1724. Residues P1210 to G1221 show a composition bias toward basic residues. The segment at E1228–V1580 is interaction with IFT20. Residues S1592 to Q1607 show a composition bias toward basic and acidic residues.

In terms of assembly, interacts (via C-terminus) with IFT20. Interacts with DYNC1I2. In terms of tissue distribution, highly expressed in testis, where it primarily localizes to late spermatocytes, round spermatids and elongating spermatids (at protein level). Found in Sertoli cells of the testis (at protein level). Expressed at lower levels in epididymis (at protein level). Detected in lung, brain, liver and kidney. Also detected in bone, cartilage, trachea, pituitary gland and eye. Expressed in osteoblasts and chondrocytes.

It is found in the cell projection. It localises to the cilium. Its subcellular location is the flagellum. The protein localises to the cytoplasm. The protein resides in the cytoskeleton. It is found in the golgi apparatus. In terms of biological role, required for correct axoneme development in spermatozoa. Important for normal development of the manchette and sperm head morphology. Essential for male fertility. Plays a role in localization of the intraflagellar transport protein IFT20 to the manchette, suggesting function as an adapter for dynein-mediated protein transport during spermatogenesis. Also plays a role in bone growth where it seems to be required for normal osteoblast differentiation. This chain is Sperm flagellar protein 2 (Spef2), found in Mus musculus (Mouse).